The primary structure comprises 462 residues: Chitinase-like mite allergen Der f 18.0101 (462 aa).

A signal peptide spans 1–25 (MTRFSLTVLAVLAACFGSNIRPNVA). One can recognise a GH18 domain in the interval 29–378 (PKTVCYYESW…HAIQSNYYHG (350 aa)). An intrachain disulfide couples cysteine 33 to cysteine 58. Asparagine 338 carries N-linked (GlcNAc...) asparagine glycosylation. One can recognise a Chitin-binding type-2 domain in the interval 404 to 462 (VFHCHEEGFFRDKTYCATYYECKKGDFGLEKTVHHCANHLQAFDEVSRTCIDHTKIPGC). Cysteine 439 and cysteine 453 are joined by a disulfide.

Belongs to the glycosyl hydrolase 18 family. Chitinase class II subfamily. Expressed in the upper digestive tract. Staining is observed in the ventriculus, and in very rare individuals, also in the intestine or esophagus. No expression in fecal pellets neither inside the rectum nor defecated outside of the body.

The protein localises to the secreted. Probably a non-catalytic chitinase-like protein, which binds to insoluble chitin and enhances the activity of the catalytic chitinases. Has weak chitin-binding activity. The chain is Chitinase-like mite allergen Der f 18.0101 from Dermatophagoides farinae (American house dust mite).